Reading from the N-terminus, the 180-residue chain is Cytochrome b6-f complex subunit 4 (180 aa).

3 helical membrane-spanning segments follow: residues 36–56 (LSYIFPVVILGTIACTIGLAV), 95–115 (LLGVLLMGSVPAGSLTVPFLE), and 131–151 (TVSLIGTAVALWLGIGAALPI).

Belongs to the cytochrome b family. PetD subfamily. In terms of assembly, the 4 large subunits of the cytochrome b6-f complex are cytochrome b6, subunit IV (17 kDa polypeptide, petD), cytochrome f and the Rieske protein, while the 4 small subunits are petG, petL, petM and petN. The complex functions as a dimer.

It is found in the plastid. Its subcellular location is the chloroplast thylakoid membrane. In terms of biological role, component of the cytochrome b6-f complex, which mediates electron transfer between photosystem II (PSII) and photosystem I (PSI), cyclic electron flow around PSI, and state transitions. The protein is Cytochrome b6-f complex subunit 4 of Pinus thunbergii (Japanese black pine).